The primary structure comprises 128 residues: Peptidyl-prolyl cis-trans isomerase NIMA-interacting 4 (128 aa).

A disordered region spans residues 1–34 (MPPKGKGGKGAKGAAASGSGDSDKKEKAQKGGTA). Residues 32 to 126 (GTAVKVRHIL…FGYHIIMVEG (95 aa)) enclose the PpiC domain.

This sequence belongs to the PpiC/parvulin rotamase family. PIN4 subfamily.

The protein resides in the nucleus. It localises to the nucleolus. It is found in the cytoplasm. Its subcellular location is the cytoskeleton. The protein localises to the spindle. It catalyses the reaction [protein]-peptidylproline (omega=180) = [protein]-peptidylproline (omega=0). Its function is as follows. May be involved as a ribosomal RNA processing factor in ribosome biogenesis. Binds to DNA. The chain is Peptidyl-prolyl cis-trans isomerase NIMA-interacting 4 (pin4) from Danio rerio (Zebrafish).